A 564-amino-acid polypeptide reads, in one-letter code: Glutamyl-tRNA(Gln) amidotransferase subunit B, mitochondrial (564 aa).

The transit peptide at 1 to 88 directs the protein to the mitochondrion; it reads MIRQCVSHRG…DTDAKLFSRA (88 aa). The interval 26 to 63 is disordered; sequence PFHHPSPRPLGRKNWSTSDEAKSKRAAMRKGGAPPPEH.

Belongs to the GatB/GatE family. GatB subfamily. In terms of assembly, subunit of the heterotrimeric GatCAB amidotransferase (AdT) complex, composed of A, B and C subunits.

The protein localises to the mitochondrion. The catalysed reaction is L-glutamyl-tRNA(Gln) + L-glutamine + ATP + H2O = L-glutaminyl-tRNA(Gln) + L-glutamate + ADP + phosphate + H(+). Allows the formation of correctly charged Gln-tRNA(Gln) through the transamidation of misacylated Glu-tRNA(Gln) in the mitochondria. The reaction takes place in the presence of glutamine and ATP through an activated gamma-phospho-Glu-tRNA(Gln). The sequence is that of Glutamyl-tRNA(Gln) amidotransferase subunit B, mitochondrial from Ajellomyces capsulatus (strain G186AR / H82 / ATCC MYA-2454 / RMSCC 2432) (Darling's disease fungus).